The chain runs to 37 residues: Alpha-conotoxin-like Kn1.2 (37 aa).

The span at 1-15 shows a compositional bias: basic and acidic residues; the sequence is ESDGAHAKARADKPA. Positions 1–22 are excised as a propeptide; that stretch reads ESDGAHAKARADKPARSATNRQ. The tract at residues 1–23 is disordered; it reads ESDGAHAKARADKPARSATNRQP. 2 cysteine pairs are disulfide-bonded: Cys25–Cys31 and Cys26–Cys36. A Cysteine amide modification is found at Cys36.

Belongs to the conotoxin A superfamily. Expressed by the venom duct.

It localises to the secreted. Its function is as follows. Alpha-conotoxins act on postsynaptic membranes, they bind to the nicotinic acetylcholine receptors (nAChR) and thus inhibit them. This toxin inhibits high voltage-activated (HVA) calcium channel currents in rat DRG neurons (13% inhibition at 1 uM toxin) probably by activating GABA(B) receptors (GABBR1 and/or GABBR2). In Conus kinoshitai (Kinoshita's cone), this protein is Alpha-conotoxin-like Kn1.2.